A 107-amino-acid polypeptide reads, in one-letter code: Universal stress protein B homolog (107 aa).

A run of 2 helical transmembrane segments spans residues 6–23 (TILF…ARYF) and 89–106 (LFIL…SSFI).

The protein belongs to the universal stress protein B family.

The protein resides in the cell inner membrane. This Vibrio atlanticus (strain LGP32) (Vibrio splendidus (strain Mel32)) protein is Universal stress protein B homolog.